The following is a 2287-amino-acid chain: Protein Ycf2 (2287 aa).

1641–1648 (GSIGTGRS) is a binding site for ATP.

Belongs to the Ycf2 family.

It localises to the plastid. The protein resides in the chloroplast stroma. Probable ATPase of unknown function. Its presence in a non-photosynthetic plant (Epifagus virginiana) and experiments in tobacco indicate that it has an essential function which is probably not related to photosynthesis. This chain is Protein Ycf2, found in Lepidium virginicum (Virginia pepperweed).